The primary structure comprises 204 residues: Cytochrome c biogenesis ATP-binding export protein CcmA (204 aa).

Residues 2–202 enclose the ABC transporter domain; that stretch reads LEIRNVTCIR…DSNELKKIRL (201 aa). Residue 34–41 participates in ATP binding; it reads GQNGAGKT.

This sequence belongs to the ABC transporter superfamily. CcmA exporter (TC 3.A.1.107) family. In terms of assembly, the complex is composed of two ATP-binding proteins (CcmA) and two transmembrane proteins (CcmB).

It is found in the cell inner membrane. The catalysed reaction is heme b(in) + ATP + H2O = heme b(out) + ADP + phosphate + H(+). In terms of biological role, part of the ABC transporter complex CcmAB involved in the biogenesis of c-type cytochromes; once thought to export heme, this seems not to be the case, but its exact role is uncertain. Responsible for energy coupling to the transport system. This is Cytochrome c biogenesis ATP-binding export protein CcmA from Aliivibrio fischeri (strain ATCC 700601 / ES114) (Vibrio fischeri).